Reading from the N-terminus, the 210-residue chain is Large ribosomal subunit protein bL25 (210 aa).

It belongs to the bacterial ribosomal protein bL25 family. CTC subfamily. Part of the 50S ribosomal subunit; part of the 5S rRNA/L5/L18/L25 subcomplex. Contacts the 5S rRNA. Binds to the 5S rRNA independently of L5 and L18.

Its function is as follows. This is one of the proteins that binds to the 5S RNA in the ribosome where it forms part of the central protuberance. This chain is Large ribosomal subunit protein bL25, found in Saccharophagus degradans (strain 2-40 / ATCC 43961 / DSM 17024).